A 566-amino-acid chain; its full sequence is Urease subunit beta (566 aa).

Positions 129–566 (GGIDTHIHFI…VPMARRYFMF (438 aa)) constitute a Urease domain. Ni(2+)-binding residues include H134, H136, and K217. K217 is subject to N6-carboxylysine. H219 contacts substrate. Ni(2+) contacts are provided by H246 and H272. The active-site Proton donor is the H320. D360 is a binding site for Ni(2+).

It belongs to the metallo-dependent hydrolases superfamily. Urease alpha subunit family. Heterohexamer of 3 UreA (alpha) and 3 UreB (beta) subunits. Ni cation is required as a cofactor. Carboxylation allows a single lysine to coordinate two nickel ions.

It is found in the cytoplasm. It carries out the reaction urea + 2 H2O + H(+) = hydrogencarbonate + 2 NH4(+). It functions in the pathway nitrogen metabolism; urea degradation; CO(2) and NH(3) from urea (urease route): step 1/1. The chain is Urease subunit beta from Aliarcobacter butzleri (strain RM4018) (Arcobacter butzleri).